We begin with the raw amino-acid sequence, 329 residues long: 4-hydroxythreonine-4-phosphate dehydrogenase (329 aa).

Residues His136 and Thr137 each contribute to the substrate site. 3 residues coordinate a divalent metal cation: His166, His211, and His266. Residues Lys274, Asn283, and Arg292 each coordinate substrate.

The protein belongs to the PdxA family. As to quaternary structure, homodimer. Requires Zn(2+) as cofactor. Mg(2+) serves as cofactor. The cofactor is Co(2+).

Its subcellular location is the cytoplasm. It carries out the reaction 4-(phosphooxy)-L-threonine + NAD(+) = 3-amino-2-oxopropyl phosphate + CO2 + NADH. The protein operates within cofactor biosynthesis; pyridoxine 5'-phosphate biosynthesis; pyridoxine 5'-phosphate from D-erythrose 4-phosphate: step 4/5. Its function is as follows. Catalyzes the NAD(P)-dependent oxidation of 4-(phosphooxy)-L-threonine (HTP) into 2-amino-3-oxo-4-(phosphooxy)butyric acid which spontaneously decarboxylates to form 3-amino-2-oxopropyl phosphate (AHAP). The sequence is that of 4-hydroxythreonine-4-phosphate dehydrogenase from Escherichia coli O6:H1 (strain CFT073 / ATCC 700928 / UPEC).